An 857-amino-acid polypeptide reads, in one-letter code: Leucine--tRNA ligase (857 aa).

The 'HIGH' region signature appears at 42-52 (PYPSGRLHMGH). The 'KMSKS' region motif lies at 617-621 (KMSKS). Lys-620 lines the ATP pocket.

It belongs to the class-I aminoacyl-tRNA synthetase family.

It localises to the cytoplasm. It carries out the reaction tRNA(Leu) + L-leucine + ATP = L-leucyl-tRNA(Leu) + AMP + diphosphate. The chain is Leucine--tRNA ligase from Vibrio parahaemolyticus serotype O3:K6 (strain RIMD 2210633).